Consider the following 452-residue polypeptide: Cobyrinate a,c-diamide synthase (452 aa).

The 194-residue stretch at 248–441 (RVAYALDAAF…LHIHFYQNLL (194 aa)) folds into the GATase cobBQ-type domain. Cysteine 330 serves as the catalytic Nucleophile.

It belongs to the CobB/CbiA family. The cofactor is Mg(2+).

The catalysed reaction is cob(II)yrinate + 2 L-glutamine + 2 ATP + 2 H2O = cob(II)yrinate a,c diamide + 2 L-glutamate + 2 ADP + 2 phosphate + 2 H(+). Its pathway is cofactor biosynthesis; adenosylcobalamin biosynthesis; cob(II)yrinate a,c-diamide from sirohydrochlorin (anaerobic route): step 10/10. Its function is as follows. Catalyzes the ATP-dependent amidation of the two carboxylate groups at positions a and c of cobyrinate, using either L-glutamine or ammonia as the nitrogen source. The polypeptide is Cobyrinate a,c-diamide synthase (Listeria monocytogenes serotype 4b (strain F2365)).